A 286-amino-acid polypeptide reads, in one-letter code: Pantothenate synthetase (286 aa).

Met31–His38 contributes to the ATP binding site. His38 functions as the Proton donor in the catalytic mechanism. Residue Gln65 participates in (R)-pantoate binding. Gln65 lines the beta-alanine pocket. Gly153 to Asp156 serves as a coordination point for ATP. Gln159 contributes to the (R)-pantoate binding site. Leu190–Arg193 is an ATP binding site.

The protein belongs to the pantothenate synthetase family. Homodimer.

The protein localises to the cytoplasm. The enzyme catalyses (R)-pantoate + beta-alanine + ATP = (R)-pantothenate + AMP + diphosphate + H(+). The protein operates within cofactor biosynthesis; (R)-pantothenate biosynthesis; (R)-pantothenate from (R)-pantoate and beta-alanine: step 1/1. In terms of biological role, catalyzes the condensation of pantoate with beta-alanine in an ATP-dependent reaction via a pantoyl-adenylate intermediate. The polypeptide is Pantothenate synthetase (Corynebacterium diphtheriae (strain ATCC 700971 / NCTC 13129 / Biotype gravis)).